The following is a 188-amino-acid chain: Guanylate kinase (188 aa).

One can recognise a Guanylate kinase-like domain in the interval 4–183; that stretch reads RNIVVLTAPS…AVEETLTRIR (180 aa). 11 to 18 lines the ATP pocket; that stretch reads APSGAGKT.

It belongs to the guanylate kinase family.

Its subcellular location is the cytoplasm. The catalysed reaction is GMP + ATP = GDP + ADP. Essential for recycling GMP and indirectly, cGMP. This chain is Guanylate kinase, found in Salinibacter ruber (strain DSM 13855 / M31).